Consider the following 593-residue polypeptide: Inactive metallocarboxypeptidase ECM14 (593 aa).

The N-terminal stretch at 1–22 is a signal peptide; it reads MHFSVRLSLLLTLASSLPLVSA. A propeptide spanning residues 23 to 184 is cleaved from the precursor; it reads IPQHEDQAYT…QTIYESYPKT (162 aa). The disordered stretch occupies residues 180-210; the sequence is SYPKTNPSSPSQQGPTTRRFSPSASTSKTKP. Positions 182–210 are enriched in polar residues; the sequence is PKTNPSSPSQQGPTTRRFSPSASTSKTKP. One can recognise a Peptidase M14 domain in the interval 220-546; the sequence is DYQPLSVLLP…RAMVAMGKFL (327 aa). Zn(2+)-binding residues include His-285 and Glu-288. Substrate-binding positions include 285-288, Arg-343, and 360-361; these read HARE and DH. A disulfide bridge connects residues Cys-354 and Cys-377. N-linked (GlcNAc...) asparagine glycosylation occurs at Asn-370. Residue His-417 participates in Zn(2+) binding. Position 418-419 (418-419) interacts with substrate; it reads SY. The segment at 557–593 is disordered; it reads NGPHAAEETQNYDDDFEEDEAEEDSDVFRAQGDDMSS. The span at 566–581 shows a compositional bias: acidic residues; that stretch reads QNYDDDFEEDEAEEDS.

This sequence belongs to the peptidase M14 family. It depends on Zn(2+) as a cofactor.

The protein resides in the vacuole. It localises to the secreted. Functionally, inactive carboxypeptidase that may play a role in cell wall organization and biogenesis. In Arthroderma gypseum (strain ATCC MYA-4604 / CBS 118893) (Microsporum gypseum), this protein is Inactive metallocarboxypeptidase ECM14 (ECM14).